A 189-amino-acid chain; its full sequence is Orotate phosphoribosyltransferase (189 aa).

5-phospho-alpha-D-ribose 1-diphosphate contacts are provided by residues Arg94, Lys95, Lys98, and Glu120–Ser128. The orotate site is built by Thr124 and Arg152.

The protein belongs to the purine/pyrimidine phosphoribosyltransferase family. PyrE subfamily. In terms of assembly, homodimer. Mg(2+) serves as cofactor.

It carries out the reaction orotidine 5'-phosphate + diphosphate = orotate + 5-phospho-alpha-D-ribose 1-diphosphate. Its pathway is pyrimidine metabolism; UMP biosynthesis via de novo pathway; UMP from orotate: step 1/2. Catalyzes the transfer of a ribosyl phosphate group from 5-phosphoribose 1-diphosphate to orotate, leading to the formation of orotidine monophosphate (OMP). This chain is Orotate phosphoribosyltransferase, found in Thermococcus gammatolerans (strain DSM 15229 / JCM 11827 / EJ3).